The primary structure comprises 625 residues: MVVKKRKLATEAGGSDERPKYLPGKHPKNQEKTPHVDYNAPLNPKSELFLDDWHIPKFNRFISFTLDVLIDKYKDIFKDFIKLPSRKFHPQYYYKIQQPMSINEIKSRDYEYEDGPSNFLLDVELLTKNCQAYNEYDSLIVKNSMQVVMLIEFEVLKAKNLKRNYLINSEVKAKLLHYLNKLVDATEKKINQALLGASSPKNLDDKVKLSEPFMELVDKDELPEYYEIVHSPMALSIVKQNLEIGQYSKIYDFIIDMLLVFQNAHIFNDPSALIYKDATTLTNYFNYLIQKEFFPELQDLNERGEINLEFDKFEFENYLAIGGGGPAAAGALAISALDNDIEPESNREDLIDQADYDFNHFEGLGNGYNRSLLTEDYLLNPNNFKKLIAKPETVQSEVKNERSTTSDIEKTNSLESEHLKIPKYNVIKSMQKEMQSLSEQHTMEYKPYKLIQQIYIFSSKNLYSQATKPLLGSRPSCNQNWVEYIFNGNELSQNENAFSFMLQPMQTFLTLQSHLTSSLKDTETLLTINKEPVKSRTSNVNSNLSQPQQQENDVIGNDTKQDIENLTIGGGNNNDIVGNDNDKRNNITEIFDIRLSEGLNHLMFRCEDKISHETEFMNFWINVLP.

Residues 1 to 35 (MVVKKRKLATEAGGSDERPKYLPGKHPKNQEKTPH) are disordered. Bromo domains follow at residues 53-158 (WHIP…VLKA) and 181-292 (KLVD…IQKE). Phosphoserine is present on residues Ser199 and Ser545. Polar residues predominate over residues 536 to 552 (RTSNVNSNLSQPQQQEN). The tract at residues 536 to 555 (RTSNVNSNLSQPQQQENDVI) is disordered.

As to quaternary structure, component of the two forms of the RSC complex composed of at least either RSC1 or RSC2, and ARP7, ARP9, LDB7, NPL6, RSC3, RSC30, RSC4, RSC58, RSC6, RSC8, RSC9, SFH1, STH1, HTL1 and probably RTT102. The complexes interact with histone and histone variant components of centromeric chromatin.

The protein localises to the nucleus. Component of the chromatin structure remodeling complex (RSC), which is involved in transcription regulation and nucleosome positioning. RSC is responsible for the transfer of a histone octamer from a nucleosome core particle to naked DNA. The reaction requires ATP and involves an activated RSC-nucleosome intermediate. Remodeling reaction also involves DNA translocation, DNA twist and conformational change. As a reconfigurer of centromeric and flanking nucleosomes, RSC complex is required both for proper kinetochore function in chromosome segregation and, via a PKC1-dependent signaling pathway, for organization of the cellular cytoskeleton. The chain is Chromatin structure-remodeling complex subunit RSC4 (RSC4) from Saccharomyces cerevisiae (strain ATCC 204508 / S288c) (Baker's yeast).